The following is a 104-amino-acid chain: MERVASIMYLYPGNKEEYKKRHDELWPEMKEALKAHGAANYSIFLDEKTDTLFAYVEVEDKAIYDKIAETEICQKWWKYMAPIMKSNPNNSPVAVDLKEVFYLA.

A substrate-binding site is contributed by tyrosine 18. The Proton donor role is filled by histidine 22. Residues tyrosine 41 and 76-77 (WW) contribute to the substrate site.

This sequence belongs to the rhamnose mutarotase family. In terms of assembly, homodimer.

The protein resides in the cytoplasm. It catalyses the reaction alpha-L-rhamnose = beta-L-rhamnose. It functions in the pathway carbohydrate metabolism; L-rhamnose metabolism. Its function is as follows. Involved in the anomeric conversion of L-rhamnose. The polypeptide is L-rhamnose mutarotase (Listeria monocytogenes serovar 1/2a (strain ATCC BAA-679 / EGD-e)).